Reading from the N-terminus, the 405-residue chain is SPbeta prophage-derived uncharacterized protein YomR (405 aa).

Residues 9 to 36 adopt a coiled-coil conformation; that stretch reads QLKQNNIQINSLRGSNDRAEKHMLEHEQ.

This Bacillus subtilis (strain 168) protein is SPbeta prophage-derived uncharacterized protein YomR (yomR).